We begin with the raw amino-acid sequence, 129 residues long: Glycine cleavage system H protein (129 aa).

Residues 24–106 (TYTVGITEHA…YTDGWIFKIK (83 aa)) form the Lipoyl-binding domain. Residue lysine 65 is modified to N6-lipoyllysine.

This sequence belongs to the GcvH family. As to quaternary structure, the glycine cleavage system is composed of four proteins: P, T, L and H. (R)-lipoate is required as a cofactor.

Its function is as follows. The glycine cleavage system catalyzes the degradation of glycine. The H protein shuttles the methylamine group of glycine from the P protein to the T protein. This Klebsiella pneumoniae subsp. pneumoniae (strain ATCC 700721 / MGH 78578) protein is Glycine cleavage system H protein.